The chain runs to 117 residues: Large ribosomal subunit protein bL20 (117 aa).

The protein belongs to the bacterial ribosomal protein bL20 family.

In terms of biological role, binds directly to 23S ribosomal RNA and is necessary for the in vitro assembly process of the 50S ribosomal subunit. It is not involved in the protein synthesizing functions of that subunit. This Histophilus somni (strain 129Pt) (Haemophilus somnus) protein is Large ribosomal subunit protein bL20.